The chain runs to 352 residues: Glucose 1-dehydrogenase 1 (352 aa).

A Zn(2+)-binding site is contributed by Cys35. Residue Thr37 coordinates substrate. His60 and Glu61 together coordinate Zn(2+). Residue Asn83 coordinates substrate. Cys87, Cys90, Cys93, and Cys101 together coordinate Zn(2+). The substrate site is built by Glu108, Gln144, and Asp148. Zn(2+) is bound at residue Gln144. Residues 182 to 185 (TGTI), 204 to 206 (NKR), 264 to 266 (FGF), 292 to 294 (LIN), and Lys341 contribute to the NADP(+) site. Asn294 contributes to the substrate binding site.

Belongs to the zinc-containing alcohol dehydrogenase family. Glucose 1-dehydrogenase subfamily. It depends on Zn(2+) as a cofactor.

The enzyme catalyses D-glucose + NAD(+) = D-glucono-1,5-lactone + NADH + H(+). The catalysed reaction is D-glucose + NADP(+) = D-glucono-1,5-lactone + NADPH + H(+). Catalyzes the NAD(P)(+)-dependent oxidation of D-glucose to D-gluconate via gluconolactone. Can utilize both NAD(+) and NADP(+) as electron acceptor. Is involved in the degradation of glucose through a non-phosphorylative variant of the Entner-Doudoroff pathway. This chain is Glucose 1-dehydrogenase 1, found in Picrophilus torridus (strain ATCC 700027 / DSM 9790 / JCM 10055 / NBRC 100828 / KAW 2/3).